The following is a 217-amino-acid chain: Pyridoxine/pyridoxamine 5'-phosphate oxidase (217 aa).

Residues 13-16 (RREY) and Lys-71 each bind substrate. Residues 66 to 71 (RIVLLK), 81 to 82 (YT), Arg-87, Lys-88, and Gln-110 contribute to the FMN site. Substrate contacts are provided by Tyr-128, Arg-132, and Ser-136. FMN contacts are provided by residues 145–146 (QS) and Trp-190. 196-198 (RLH) is a binding site for substrate. Residue Arg-200 coordinates FMN.

Belongs to the pyridoxamine 5'-phosphate oxidase family. In terms of assembly, homodimer. Requires FMN as cofactor.

It carries out the reaction pyridoxamine 5'-phosphate + O2 + H2O = pyridoxal 5'-phosphate + H2O2 + NH4(+). The catalysed reaction is pyridoxine 5'-phosphate + O2 = pyridoxal 5'-phosphate + H2O2. It participates in cofactor metabolism; pyridoxal 5'-phosphate salvage; pyridoxal 5'-phosphate from pyridoxamine 5'-phosphate: step 1/1. The protein operates within cofactor metabolism; pyridoxal 5'-phosphate salvage; pyridoxal 5'-phosphate from pyridoxine 5'-phosphate: step 1/1. Catalyzes the oxidation of either pyridoxine 5'-phosphate (PNP) or pyridoxamine 5'-phosphate (PMP) into pyridoxal 5'-phosphate (PLP). This Serratia proteamaculans (strain 568) protein is Pyridoxine/pyridoxamine 5'-phosphate oxidase.